Consider the following 392-residue polypeptide: Bifunctional enzyme Fae/Hps (392 aa).

Residues 1–161 form a formaldehyde-activating enzyme region; the sequence is MFLVGEALIG…YEKERSVHPV (161 aa). Residue His17 is the Proton donor of the active site. Substrate is bound by residues Asp19, Leu48, Lys66, Thr68, and Gln83. Residues 162–392 are 3-hexulose-6-phosphate synthase; sequence MGYRVMRLWD…IDQYRIMTDF (231 aa).

In the N-terminal section; belongs to the formaldehyde-activating enzyme family. This sequence in the C-terminal section; belongs to the HPS/KGPDC family. HPS subfamily.

It catalyses the reaction 5,6,7,8-tetrahydromethanopterin + formaldehyde = 5,10-methylenetetrahydromethanopterin + H2O. The catalysed reaction is D-ribulose 5-phosphate + formaldehyde = D-arabino-hex-3-ulose 6-phosphate. It participates in carbohydrate biosynthesis; D-ribose 5-phosphate biosynthesis. Its function is as follows. Catalyzes the condensation of formaldehyde with tetrahydromethanopterin (H(4)MPT) to 5,10-methylenetetrahydromethanopterin. In terms of biological role, catalyzes the reversible formation of ribulose-5-phosphate and formaldehyde from 3-hexulose-6-phosphate. The sequence is that of Bifunctional enzyme Fae/Hps from Methanothrix thermoacetophila (strain DSM 6194 / JCM 14653 / NBRC 101360 / PT) (Methanosaeta thermophila).